The primary structure comprises 365 residues: 2-aminoethylphosphonate--pyruvate transaminase (365 aa).

Residue lysine 194 is modified to N6-(pyridoxal phosphate)lysine.

Belongs to the class-V pyridoxal-phosphate-dependent aminotransferase family. PhnW subfamily. As to quaternary structure, homodimer. It depends on pyridoxal 5'-phosphate as a cofactor.

It carries out the reaction (2-aminoethyl)phosphonate + pyruvate = phosphonoacetaldehyde + L-alanine. Functionally, involved in phosphonate degradation. The sequence is that of 2-aminoethylphosphonate--pyruvate transaminase from Bacillus cereus (strain ZK / E33L).